Here is a 386-residue protein sequence, read N- to C-terminus: Heat-inducible transcription repressor HrcA (386 aa).

Belongs to the HrcA family.

Negative regulator of class I heat shock genes (grpE-dnaK-dnaJ and groELS operons). Prevents heat-shock induction of these operons. The polypeptide is Heat-inducible transcription repressor HrcA (Chlamydia abortus (strain DSM 27085 / S26/3) (Chlamydophila abortus)).